A 180-amino-acid chain; its full sequence is ATP-dependent protease subunit HslV (180 aa).

Threonine 5 is an active-site residue. Na(+)-binding residues include glycine 161, cysteine 164, and threonine 167.

It belongs to the peptidase T1B family. HslV subfamily. In terms of assembly, a double ring-shaped homohexamer of HslV is capped on each side by a ring-shaped HslU homohexamer. The assembly of the HslU/HslV complex is dependent on binding of ATP.

It localises to the cytoplasm. The catalysed reaction is ATP-dependent cleavage of peptide bonds with broad specificity.. Its activity is regulated as follows. Allosterically activated by HslU binding. Protease subunit of a proteasome-like degradation complex believed to be a general protein degrading machinery. The sequence is that of ATP-dependent protease subunit HslV from Campylobacter jejuni subsp. jejuni serotype O:2 (strain ATCC 700819 / NCTC 11168).